The primary structure comprises 142 residues: Nucleoside diphosphate kinase (142 aa).

ATP contacts are provided by Lys-11, Phe-59, Arg-87, Thr-93, Arg-104, and Asn-114. The active-site Pros-phosphohistidine intermediate is His-117.

Belongs to the NDK family. Homotetramer. It depends on Mg(2+) as a cofactor.

Its subcellular location is the cytoplasm. It carries out the reaction a 2'-deoxyribonucleoside 5'-diphosphate + ATP = a 2'-deoxyribonucleoside 5'-triphosphate + ADP. It catalyses the reaction a ribonucleoside 5'-diphosphate + ATP = a ribonucleoside 5'-triphosphate + ADP. Its function is as follows. Major role in the synthesis of nucleoside triphosphates other than ATP. The ATP gamma phosphate is transferred to the NDP beta phosphate via a ping-pong mechanism, using a phosphorylated active-site intermediate. The polypeptide is Nucleoside diphosphate kinase (Yersinia pseudotuberculosis serotype I (strain IP32953)).